Here is a 336-residue protein sequence, read N- to C-terminus: Dihydroorotate dehydrogenase (quinone) (336 aa).

FMN contacts are provided by residues 62 to 66 (AGLDK) and Thr86. Lys66 serves as a coordination point for substrate. 111–115 (NRMGF) contacts substrate. 2 residues coordinate FMN: Asn139 and Asn172. Asn172 is a substrate binding site. The active-site Nucleophile is Ser175. Asn177 contacts substrate. Residues Lys217 and Thr245 each contribute to the FMN site. 246-247 (NT) provides a ligand contact to substrate. FMN contacts are provided by residues Gly268, Gly297, and 318 to 319 (YS).

Belongs to the dihydroorotate dehydrogenase family. Type 2 subfamily. As to quaternary structure, monomer. It depends on FMN as a cofactor.

The protein resides in the cell membrane. It carries out the reaction (S)-dihydroorotate + a quinone = orotate + a quinol. It functions in the pathway pyrimidine metabolism; UMP biosynthesis via de novo pathway; orotate from (S)-dihydroorotate (quinone route): step 1/1. In terms of biological role, catalyzes the conversion of dihydroorotate to orotate with quinone as electron acceptor. In Aliivibrio fischeri (strain ATCC 700601 / ES114) (Vibrio fischeri), this protein is Dihydroorotate dehydrogenase (quinone).